The chain runs to 230 residues: Cytochrome c oxidase subunit 2 (230 aa).

Residues 1-14 (MAHPTQLGFQDAAS) are Mitochondrial intermembrane-facing. Residues 15–45 (PVMEELLHFHDHALMIVFLISALVLYVIITT) traverse the membrane as a helical segment. Residues 46–59 (VSTKLTNMYILDSQ) lie on the Mitochondrial matrix side of the membrane. Residues 60 to 87 (EIEIVWTVLPALILILIALPSLRILYLM) form a helical membrane-spanning segment. Over 88–230 (DEINDPHLTI…NWSTLMLKDA (143 aa)) the chain is Mitochondrial intermembrane. Residues His161, Cys196, Glu198, Cys200, His204, and Met207 each contribute to the Cu cation site. Position 198 (Glu198) interacts with Mg(2+).

This sequence belongs to the cytochrome c oxidase subunit 2 family. As to quaternary structure, component of the cytochrome c oxidase (complex IV, CIV), a multisubunit enzyme composed of 14 subunits. The complex is composed of a catalytic core of 3 subunits MT-CO1, MT-CO2 and MT-CO3, encoded in the mitochondrial DNA, and 11 supernumerary subunits COX4I, COX5A, COX5B, COX6A, COX6B, COX6C, COX7A, COX7B, COX7C, COX8 and NDUFA4, which are encoded in the nuclear genome. The complex exists as a monomer or a dimer and forms supercomplexes (SCs) in the inner mitochondrial membrane with NADH-ubiquinone oxidoreductase (complex I, CI) and ubiquinol-cytochrome c oxidoreductase (cytochrome b-c1 complex, complex III, CIII), resulting in different assemblies (supercomplex SCI(1)III(2)IV(1) and megacomplex MCI(2)III(2)IV(2)). Found in a complex with TMEM177, COA6, COX18, COX20, SCO1 and SCO2. Interacts with TMEM177 in a COX20-dependent manner. Interacts with COX20. Interacts with COX16. Requires Cu cation as cofactor.

Its subcellular location is the mitochondrion inner membrane. It catalyses the reaction 4 Fe(II)-[cytochrome c] + O2 + 8 H(+)(in) = 4 Fe(III)-[cytochrome c] + 2 H2O + 4 H(+)(out). Functionally, component of the cytochrome c oxidase, the last enzyme in the mitochondrial electron transport chain which drives oxidative phosphorylation. The respiratory chain contains 3 multisubunit complexes succinate dehydrogenase (complex II, CII), ubiquinol-cytochrome c oxidoreductase (cytochrome b-c1 complex, complex III, CIII) and cytochrome c oxidase (complex IV, CIV), that cooperate to transfer electrons derived from NADH and succinate to molecular oxygen, creating an electrochemical gradient over the inner membrane that drives transmembrane transport and the ATP synthase. Cytochrome c oxidase is the component of the respiratory chain that catalyzes the reduction of oxygen to water. Electrons originating from reduced cytochrome c in the intermembrane space (IMS) are transferred via the dinuclear copper A center (CU(A)) of subunit 2 and heme A of subunit 1 to the active site in subunit 1, a binuclear center (BNC) formed by heme A3 and copper B (CU(B)). The BNC reduces molecular oxygen to 2 water molecules using 4 electrons from cytochrome c in the IMS and 4 protons from the mitochondrial matrix. In Formosania lacustris (Oriental stream loach), this protein is Cytochrome c oxidase subunit 2 (mt-co2).